The sequence spans 59 residues: Protein translocase subunit SecE (59 aa).

A helical transmembrane segment spans residues 33 to 53; it reads GAGIALVGLLGFIIFAVMTFV.

The protein belongs to the SecE/SEC61-gamma family. Component of the Sec protein translocase complex. Heterotrimer consisting of SecY (alpha), SecG (beta) and SecE (gamma) subunits. The heterotrimers can form oligomers, although 1 heterotrimer is thought to be able to translocate proteins. Interacts with the ribosome. May interact with SecDF, and other proteins may be involved.

It localises to the cell membrane. In terms of biological role, essential subunit of the Sec protein translocation channel SecYEG. Clamps together the 2 halves of SecY. May contact the channel plug during translocation. In Haloarcula marismortui (strain ATCC 43049 / DSM 3752 / JCM 8966 / VKM B-1809) (Halobacterium marismortui), this protein is Protein translocase subunit SecE.